The primary structure comprises 545 residues: MAKILSFSDDARHQLEHGVNALADAVKVTLGPRGRNVVLDKKFGAPTITNDGVTIAKEIELTNPYENLGAQLVKEVATKTNDVAGDGTTTATVLAQALVREGLRNVAAGANPTGLKRGIDAAATKVSEELLGKAVDVSDKAAIAHVATVSAQDSTIGELIAEAMERVGRDGVITVEEGSTLATELDVTEGLQFDKGFISPNFVTDAEGQESVLEDAYILITTQKISAIEELLPLLEKVLQESKPLLIIAEDVEGQALSTLVVNALRKTMKVCAVKAPGFGDRRKAMLQDMAILTGAELVAPELGYKLDQVGLEVLGTARRVVVDKENTTIVDGGGQASDAEDRVAQIRKEIEASDSEWDREKLAERLAKLSGGIAVIRAGAATEVEMKERKHRIEDAIAATKAAVEEGTVPGGGAALAQVLPALDGDLGLTGDEQVGVSIVRKALIEPLRWIAQNAGHDGYVVVQKVAGKDWGHGLDAATGEYVDLAKAGILDPVKVTRNAVANAASIAGLLLTTESLVVEKPQEPEPAAAGHGHGHGHQHGPGF.

ATP-binding positions include 29 to 32 (TLGP), 86 to 90 (DGTTT), glycine 413, 477 to 479 (DAA), and aspartate 493. A disordered region spans residues 526 to 545 (PEPAAAGHGHGHGHQHGPGF). The segment covering 534–545 (GHGHGHQHGPGF) has biased composition (basic residues).

Belongs to the chaperonin (HSP60) family. Forms a cylinder of 14 subunits composed of two heptameric rings stacked back-to-back. Interacts with the co-chaperonin GroES.

The protein resides in the cytoplasm. The catalysed reaction is ATP + H2O + a folded polypeptide = ADP + phosphate + an unfolded polypeptide.. Its function is as follows. Together with its co-chaperonin GroES, plays an essential role in assisting protein folding. The GroEL-GroES system forms a nano-cage that allows encapsulation of the non-native substrate proteins and provides a physical environment optimized to promote and accelerate protein folding. The chain is Chaperonin GroEL 2 from Salinispora arenicola (strain CNS-205).